A 515-amino-acid polypeptide reads, in one-letter code: NADH-quinone oxidoreductase subunit N (515 aa).

The next 14 membrane-spanning stretches (helical) occupy residues 14 to 34 (ITPILVILGAACLGVLVEAFL), 40 to 60 (WSAQVGLSLLALVAAGVALAL), 80 to 100 (APTLFLWGTLLALGLGAILLI), 138 to 158 (TEVFPLALFALGGMMVFCAAN), 160 to 180 (LLTMFIALEVLSLPLYLMCGL), 195 to 215 (YFLLGAFASAFFLYGLALLYG), 239 to 259 (LFAGLGLLVVGLLFKASVGPF), 271 to 291 (PTAVTGFMAACTKVAAFGGIL), 307 to 327 (GVLYAVAIVSMAIGVVLGLTQ), 333 to 353 (MIAYSSVAHAGFLLVGSIALT), 361 to 381 (MFYLLAYGFTTIAIFGVISLV), 404 to 424 (VAWVFTFLLLALAGIPMTSGF), 438 to 458 (GMAPLVVVALVASAVAAFFYL), and 485 to 505 (AAITLGVVVTLLLGVLPSLAL).

It belongs to the complex I subunit 2 family. In terms of assembly, NDH-1 is composed of 14 different subunits. Subunits NuoA, H, J, K, L, M, N constitute the membrane sector of the complex.

It is found in the cell membrane. It carries out the reaction a quinone + NADH + 5 H(+)(in) = a quinol + NAD(+) + 4 H(+)(out). In terms of biological role, NDH-1 shuttles electrons from NADH, via FMN and iron-sulfur (Fe-S) centers, to quinones in the respiratory chain. The immediate electron acceptor for the enzyme in this species is believed to be a menaquinone. Couples the redox reaction to proton translocation (for every two electrons transferred, four hydrogen ions are translocated across the cytoplasmic membrane), and thus conserves the redox energy in a proton gradient. The protein is NADH-quinone oxidoreductase subunit N of Saccharopolyspora erythraea (strain ATCC 11635 / DSM 40517 / JCM 4748 / NBRC 13426 / NCIMB 8594 / NRRL 2338).